A 547-amino-acid polypeptide reads, in one-letter code: CAP-Gly domain-containing linker protein 3 (547 aa).

A disordered region spans residues Met1 to Ala49. A compositionally biased stretch (acidic residues) spans Glu16–Val27. ANK repeat units lie at residues Thr117–Arg158, Thr160–Ser191, and Asn197–Arg229. Residues Gly314 to Ser356 enclose the CAP-Gly 1 domain. The interval Asp365–Gly413 is disordered. The span at Pro367–Thr377 shows a compositional bias: low complexity. Phosphothreonine is present on Thr374. Residues Gly387 to Ser399 are compositionally biased toward basic residues. Residues Ser399 and Ser401 each carry the phosphoserine modification. In terms of domain architecture, CAP-Gly 2 spans Gly436 to Pro478. The tract at residues Ser488–Ser547 is goLD. S-palmitoyl cysteine attachment occurs at residues Cys534 and Cys535.

In terms of assembly, homodimer. Interacts with AKT1 and AKT2; when AKT1 and AKT2 are phosphorylated and activated, affinity is higher for AKT2. Interacts with ZDHHC13 (via ANK repeats). Interacts with ZDHHC17 (via ANK repeats). In terms of processing, palmitoylation by ZDHHC17 regulates association with the plasma membrane.

The protein localises to the cell membrane. It is found in the cytoplasm. Its subcellular location is the golgi apparatus. It localises to the golgi stack. Functionally, functions as a cytoplasmic linker protein. Involved in TGN-endosome dynamics. May modulate the cellular compartmentalization of AKT kinase family and promote its cell membrane localization, thereby playing a role in glucose transport in adipocytes. This is CAP-Gly domain-containing linker protein 3 (Clip3) from Mus musculus (Mouse).